Reading from the N-terminus, the 313-residue chain is Mas-related G-protein coupled receptor member A4 (313 aa).

Residues 1-25 (MAPTTTNPMNETIPGSIDIETLIPN) lie on the Extracellular side of the membrane. The N-linked (GlcNAc...) asparagine glycan is linked to Asn10. A helical membrane pass occupies residues 26-46 (LMIIIFGLVGLTGNVILFWLL). At 47–54 (GFHLHRNA) the chain is on the cytoplasmic side. Residues 55-75 (FLVYILNLALADFLFLLCHII) traverse the membrane as a helical segment. Asn76 is a glycosylation site (N-linked (GlcNAc...) asparagine). Residues 76–93 (NSTMLLLKVHLPNNILNH) are Extracellular-facing. A helical membrane pass occupies residues 94–114 (CFDIIMTVLYITGLSMLSAIS). Residues 115–137 (TERCLSVLCPIWYRCRRPEHTST) are Cytoplasmic-facing. The helical transmembrane segment at 138–158 (VLCAVIWFLPLLICILNGYFC) threads the bilayer. At 159–182 (HFFGPKYVIDSVCLATNFFIRTYP) the chain is on the extracellular side. Residues 183 to 203 (MFLFIVLCLSTLALLARLFCG) traverse the membrane as a helical segment. Residues 204-219 (AGKTKFTRLFVTIMLT) lie on the Cytoplasmic side of the membrane. The helical transmembrane segment at 220-240 (VLVFLLCGLPLGFFWFLVPWI) threads the bilayer. The Extracellular portion of the chain corresponds to 241 to 255 (NRDFSVLDYILFQTS). The helical transmembrane segment at 256–276 (LVLTSVNSCANPIIYFFVGSF) threads the bilayer. Residues 277–313 (RHRLKHKTLKMVLQSALQDTPETPENMVEMSRSKAEP) are Cytoplasmic-facing.

This sequence belongs to the G-protein coupled receptor 1 family. Mas subfamily. In terms of tissue distribution, expressed in a subset of sensory neurons that includes nociceptors. Expressed in the subclass of non-peptidergic sensory neurons that are IB4(+) and VR1(-).

It is found in the cell membrane. In terms of biological role, orphan receptor. May be a receptor for RFamide-family neuropeptides such as NPFF and NPAF, which are analgesic in vivo. May regulate nociceptor function and/or development, including the sensation or modulation of pain. In Mus musculus (Mouse), this protein is Mas-related G-protein coupled receptor member A4 (Mrgpra4).